The chain runs to 525 residues: uncharacterized protein (525 aa).

Polar residues-rich tracts occupy residues 139–149 (LNSTPDKTQAG) and 336–349 (SGKTDNAQETHTTS). Disordered regions lie at residues 139–158 (LNSTPDKTQAGKTAKQHQAP) and 330–356 (PAPAKNSGKTDNAQETHTTSPPGPYAT).

This is an uncharacterized protein from Treponema pallidum (strain Nichols).